The primary structure comprises 395 residues: Acetylornithine aminotransferase (395 aa).

Residues Gly117 to Ala118 and Phe144 contribute to the pyridoxal 5'-phosphate site. A N(2)-acetyl-L-ornithine-binding site is contributed by Arg147. Asp230–Gln233 lines the pyridoxal 5'-phosphate pocket. N6-(pyridoxal phosphate)lysine is present on Lys259. Ser285 is a N(2)-acetyl-L-ornithine binding site. Pyridoxal 5'-phosphate is bound at residue Thr286.

The protein belongs to the class-III pyridoxal-phosphate-dependent aminotransferase family. ArgD subfamily. In terms of assembly, homodimer. Pyridoxal 5'-phosphate serves as cofactor.

Its subcellular location is the cytoplasm. The catalysed reaction is N(2)-acetyl-L-ornithine + 2-oxoglutarate = N-acetyl-L-glutamate 5-semialdehyde + L-glutamate. Its pathway is amino-acid biosynthesis; L-arginine biosynthesis; N(2)-acetyl-L-ornithine from L-glutamate: step 4/4. This is Acetylornithine aminotransferase from Methanosarcina mazei (strain ATCC BAA-159 / DSM 3647 / Goe1 / Go1 / JCM 11833 / OCM 88) (Methanosarcina frisia).